Reading from the N-terminus, the 349-residue chain is Putative inosamine-phosphate amidinotransferase 2 (349 aa).

Belongs to the amidinotransferase family.

The catalysed reaction is 1-amino-1-deoxy-scyllo-inositol 4-phosphate + L-arginine = 1-guanidino-1-deoxy-scyllo-inositol 4-phosphate + L-ornithine. It participates in antibiotic biosynthesis; streptomycin biosynthesis. In terms of biological role, it is not obvious if strB2 participates in streptomycin biosynthesis as an inosamine-phosphate amidinotransferase. Attempt to measure its activity have failed and the nucleophilic cysteine which is the key residue for amidine transfer is not conserved but replaced by a glycine residue. This is Putative inosamine-phosphate amidinotransferase 2 (strB2) from Streptomyces griseus.